We begin with the raw amino-acid sequence, 373 residues long: Probable G-protein coupled receptor 45 (373 aa).

The Extracellular segment spans residues 1–38 (MACNSTPMGTYEHLLLNVSNTLDPGDTPLSAPLRISLA). The N-linked (GlcNAc...) asparagine glycan is linked to N17. Residues 39-59 (IMMLLMIVVGFLGNTVVCIIV) traverse the membrane as a helical segment. Residues 60-75 (YQRPAMRSAINLLLAT) are Cytoplasmic-facing. Residues 76-96 (LAFSDIMLSLCCMPFTAITLI) form a helical membrane-spanning segment. Residues 97–109 (TVRWHFGDHFCRL) are Extracellular-facing. A helical transmembrane segment spans residues 110 to 130 (SATLYWFFVLEGVAILLIISV). Topologically, residues 131 to 149 (DRFLIIVQRQDKLNPRRAK) are cytoplasmic. Residues 150 to 170 (MIIAASWVLSFCISAPSFTGW) traverse the membrane as a helical segment. The Extracellular portion of the chain corresponds to 171-198 (TFMEVPARAPQCVLGYTEFPAERAYVVT). Residues 199 to 219 (LVVAVFFAPFGVMLCSYLCIL) form a helical membrane-spanning segment. Residues 220–269 (NTVRKNAVRVHNQSDSLDLRQLTGAGLRRLRRQQQQASLDLSFKTKAFTT) are Cytoplasmic-facing. Residues 270 to 290 (ILILFVGFSLCWLPHSVYSLL) traverse the membrane as a helical segment. Over 291 to 306 (SAFSRRFYYSASFYTT) the chain is Extracellular. Residues 307–327 (STCVLWLSYLKSVFNPIVYCW) form a helical membrane-spanning segment. Residues 328–373 (RIKKFREACIELLPHTFQILPKVPERIQRKIQPSTIYVCNENQSAV) lie on the Cytoplasmic side of the membrane.

The protein belongs to the G-protein coupled receptor 1 family. In terms of tissue distribution, brain specific.

It is found in the cell membrane. Orphan receptor. May play a role in brain function. The protein is Probable G-protein coupled receptor 45 (Gpr45) of Mus musculus (Mouse).